We begin with the raw amino-acid sequence, 211 residues long: Potassium-transporting ATPase KdpC subunit (211 aa).

Residues 13–35 (VVTMVLTGLLYPLAVTGLAQLLF) traverse the membrane as a helical segment.

Belongs to the KdpC family. The system is composed of three essential subunits: KdpA, KdpB and KdpC.

It is found in the cell inner membrane. Its function is as follows. Part of the high-affinity ATP-driven potassium transport (or Kdp) system, which catalyzes the hydrolysis of ATP coupled with the electrogenic transport of potassium into the cytoplasm. This subunit acts as a catalytic chaperone that increases the ATP-binding affinity of the ATP-hydrolyzing subunit KdpB by the formation of a transient KdpB/KdpC/ATP ternary complex. The protein is Potassium-transporting ATPase KdpC subunit of Myxococcus xanthus (strain DK1622).